A 306-amino-acid polypeptide reads, in one-letter code: MRKTLTVLGSINADHVISVPYFTKPGETLTGQNYQIAYGGKGANQAVAAARLGAKVAFISCIGSDSIGKTMKNAFAQEGIDTTHINTVSQEMTGMAFIQVAKSSENSIVLASGANSHLSEMVVRQSEAQIAQSDCLLMQLETPLSGVELAAQIAKKNGVKVVLNPAPAQILSDELLSLIDIITPNETEAEILTGVEVADEQSAVKAASVFHDKGIETVMITLGAKGVFVSRKGKSRIIKGFCVQAIDTTAAGDTFNGGFVTALLEEKSFDEAIRFGQAAAAISVTKKGAQSSIPTRQETLEFLEHA.

Residues 12-14 (NAD), 40-44 (GKGAN), and glutamate 141 contribute to the substrate site. ATP contacts are provided by residues asparagine 185 and 221-226 (TLGAKG). K(+)-binding residues include aspartate 247 and threonine 249. 252–253 (GD) provides a ligand contact to ATP. Aspartate 253 is a binding site for substrate. Aspartate 253 functions as the Proton acceptor in the catalytic mechanism. K(+)-binding residues include serine 283, lysine 286, glycine 288, and serine 292.

This sequence belongs to the carbohydrate kinase PfkB family. Ribokinase subfamily. Homodimer. The cofactor is Mg(2+).

It is found in the cytoplasm. It catalyses the reaction D-ribose + ATP = D-ribose 5-phosphate + ADP + H(+). Its pathway is carbohydrate metabolism; D-ribose degradation; D-ribose 5-phosphate from beta-D-ribopyranose: step 2/2. Its activity is regulated as follows. Activated by a monovalent cation that binds near, but not in, the active site. The most likely occupant of the site in vivo is potassium. Ion binding induces a conformational change that may alter substrate affinity. In terms of biological role, catalyzes the phosphorylation of ribose at O-5 in a reaction requiring ATP and magnesium. The resulting D-ribose-5-phosphate can then be used either for sythesis of nucleotides, histidine, and tryptophan, or as a component of the pentose phosphate pathway. The chain is Ribokinase from Haemophilus influenzae (strain ATCC 51907 / DSM 11121 / KW20 / Rd).